The primary structure comprises 297 residues: Inosose dehydratase (297 aa).

Belongs to the IolE/MocC family. Requires glutathione as cofactor. Co(2+) is required as a cofactor. It depends on Mn(2+) as a cofactor.

It catalyses the reaction scyllo-inosose = 3D-3,5/4-trihydroxycyclohexane-1,2-dione + H2O. It functions in the pathway polyol metabolism; myo-inositol degradation into acetyl-CoA; acetyl-CoA from myo-inositol: step 2/7. Its function is as follows. Catalyzes the dehydration of inosose (2-keto-myo-inositol, 2KMI or 2,4,6/3,5-pentahydroxycyclohexanone) to 3D-(3,5/4)-trihydroxycyclohexane-1,2-dione (D-2,3-diketo-4-deoxy-epi-inositol). The chain is Inosose dehydratase from Clostridium perfringens (strain 13 / Type A).